The chain runs to 1915 residues: Ankyrin repeat domain-containing protein 36A (1915 aa).

6 ANK repeats span residues 31–60 (YHLKRIHRAVLHGNLEKLKYLLLTYYDANK), 64–93 (KERTALHLACATGQPEMVHLLVSRRCELNL), 97–126 (EDRTPLIKAVQLRQEACATLLLQNGANPNI), 130–159 (FGRTALHYAVYNEDTSMIEKLLSHGTNIEE), 163–192 (CEYQPLLFAVSRRKVKMVEFLLKKKANVNA), and 196–225 (LGRSALIHAVTLGEKDIVILLLQHNIDVLS). Disordered stretches follow at residues 261-331 (PINS…DEQK), 470-619 (ATGQ…QKQS), 639-663 (MGGGKSGTVSSQKQPASKATSDKTD), 676-1203 (LQCG…KATS), and 1285-1304 (KDVQTSTPAEQDLEMASEGE). 2 stretches are compositionally biased toward polar residues: residues 262-272 (INSNPVSSQKQ) and 297-306 (KSGTVSSQKQ). A compositionally biased stretch (low complexity) spans 505 to 521 (SLTSSEESSERPPLSTL). 2 stretches are compositionally biased toward basic and acidic residues: residues 551–562 (PAEKATSDDKDS) and 585–596 (PAEKATSDEKDS). Composition is skewed to polar residues over residues 597–619 (VSNIATEIKKGQQSGTVSPQKQS) and 645–657 (GTVSSQKQPASKA). Composition is skewed to basic and acidic residues over residues 806-815 (RENKDGEKSR), 874-883 (RENKDGEKSR), 931-951 (SDEKDSFSNITREKKDGEISR), 976-985 (RENKDGEKSR), 1044-1053 (RENKDGEKSR), 1100-1121 (TSDEKDSVLYIAREKKDGEKSR), and 1134-1152 (ICDKEDSVPNMATEKKDEQ). Over residues 1175–1196 (VSNIPTEIKDGQQSGTVSSQKQ) the composition is skewed to polar residues. Coiled coils occupy residues 1383-1466 (IKLK…TEEQ), 1504-1531 (KEDLLHENRLMQDEIARLRLEKDTIKNQ), 1573-1614 (LAAL…ARCD), and 1727-1814 (NMLL…KRDD). Residues 1489–1508 (KTGGNNSNQVSETDEKEDLL) are disordered.

Belongs to the ANKRD36 family.

The polypeptide is Ankyrin repeat domain-containing protein 36A (ANKRD36) (Homo sapiens (Human)).